A 460-amino-acid chain; its full sequence is UDP-N-acetylmuramate--L-alanine ligase (460 aa).

ATP is bound at residue 116–122 (GSHGKTT).

It belongs to the MurCDEF family.

The protein localises to the cytoplasm. It catalyses the reaction UDP-N-acetyl-alpha-D-muramate + L-alanine + ATP = UDP-N-acetyl-alpha-D-muramoyl-L-alanine + ADP + phosphate + H(+). It participates in cell wall biogenesis; peptidoglycan biosynthesis. Functionally, cell wall formation. This Caldanaerobacter subterraneus subsp. tengcongensis (strain DSM 15242 / JCM 11007 / NBRC 100824 / MB4) (Thermoanaerobacter tengcongensis) protein is UDP-N-acetylmuramate--L-alanine ligase.